The chain runs to 408 residues: MTMAFMSVDEQMKILMRGVVDLVSEEELRQKLERSVKTGRPLRVKLGIDPTGKDLTLGHTVPLRKLRDFVECGHQGVLIIGDYTAMVGDPTGRNEARPQLTHAETTANAQRYLEQAARVLDVSKLEIRRNSEWLAPMSFSDVIRLAAKSTVARMLEREDFKKRYEEGRPIFIHEFFYPLMQGTDSVAVQADVELGGTDQKFNLLAGRDLQRDAGQEPQVCLMTPIVEGLDGVQKMSKSLGNYIGLDHTPDEMFGRTMSIPDSLIITYFTYFTDVPQEEIERIEAAMAAGENPMTFKKQLGRAIITTYGGTEEEARLAEERWVAQFSRGEVPEDIPDVVLPAAELPMQAARVLFTAGLAPSLSEARRLIEQGGFTVDGEKVTDPRAELALRPGQVLKAGKRKYGRVVLK.

The 'HIGH' region signature appears at 50-59 (PTGKDLTLGH). The short motif at 234–238 (KMSKS) is the 'KMSKS' region element. Lys237 serves as a coordination point for ATP. Residues 346-407 (MQAARVLFTA…GKRKYGRVVL (62 aa)) enclose the S4 RNA-binding domain.

This sequence belongs to the class-I aminoacyl-tRNA synthetase family. TyrS type 2 subfamily. In terms of assembly, homodimer.

It localises to the cytoplasm. It carries out the reaction tRNA(Tyr) + L-tyrosine + ATP = L-tyrosyl-tRNA(Tyr) + AMP + diphosphate + H(+). Catalyzes the attachment of tyrosine to tRNA(Tyr) in a two-step reaction: tyrosine is first activated by ATP to form Tyr-AMP and then transferred to the acceptor end of tRNA(Tyr). This Symbiobacterium thermophilum (strain DSM 24528 / JCM 14929 / IAM 14863 / T) protein is Tyrosine--tRNA ligase.